The sequence spans 309 residues: 4-hydroxy-3-methylbut-2-enyl diphosphate reductase (309 aa).

Cys12 contributes to the [4Fe-4S] cluster binding site. Residues His41 and His74 each coordinate (2E)-4-hydroxy-3-methylbut-2-enyl diphosphate. Dimethylallyl diphosphate-binding residues include His41 and His74. 2 residues coordinate isopentenyl diphosphate: His41 and His74. [4Fe-4S] cluster is bound at residue Cys96. His124 provides a ligand contact to (2E)-4-hydroxy-3-methylbut-2-enyl diphosphate. His124 serves as a coordination point for dimethylallyl diphosphate. His124 provides a ligand contact to isopentenyl diphosphate. Glu126 serves as the catalytic Proton donor. Thr167 is a (2E)-4-hydroxy-3-methylbut-2-enyl diphosphate binding site. Cys197 is a binding site for [4Fe-4S] cluster. (2E)-4-hydroxy-3-methylbut-2-enyl diphosphate is bound by residues Ser225, Ser226, Asn227, and Ser269. Residues Ser225, Ser226, Asn227, and Ser269 each contribute to the dimethylallyl diphosphate site. Isopentenyl diphosphate contacts are provided by Ser225, Ser226, Asn227, and Ser269.

The protein belongs to the IspH family. [4Fe-4S] cluster serves as cofactor.

It catalyses the reaction isopentenyl diphosphate + 2 oxidized [2Fe-2S]-[ferredoxin] + H2O = (2E)-4-hydroxy-3-methylbut-2-enyl diphosphate + 2 reduced [2Fe-2S]-[ferredoxin] + 2 H(+). The catalysed reaction is dimethylallyl diphosphate + 2 oxidized [2Fe-2S]-[ferredoxin] + H2O = (2E)-4-hydroxy-3-methylbut-2-enyl diphosphate + 2 reduced [2Fe-2S]-[ferredoxin] + 2 H(+). It participates in isoprenoid biosynthesis; dimethylallyl diphosphate biosynthesis; dimethylallyl diphosphate from (2E)-4-hydroxy-3-methylbutenyl diphosphate: step 1/1. It functions in the pathway isoprenoid biosynthesis; isopentenyl diphosphate biosynthesis via DXP pathway; isopentenyl diphosphate from 1-deoxy-D-xylulose 5-phosphate: step 6/6. Catalyzes the conversion of 1-hydroxy-2-methyl-2-(E)-butenyl 4-diphosphate (HMBPP) into a mixture of isopentenyl diphosphate (IPP) and dimethylallyl diphosphate (DMAPP). Acts in the terminal step of the DOXP/MEP pathway for isoprenoid precursor biosynthesis. The polypeptide is 4-hydroxy-3-methylbut-2-enyl diphosphate reductase (Pseudoalteromonas translucida (strain TAC 125)).